The chain runs to 269 residues: Achromobactin transport ATP-binding protein CbrD (269 aa).

The region spanning 4–240 (ITSRELTLGY…ALVKTVFNLD (237 aa)) is the ABC transporter domain. Residue 36-43 (GSNGCGKS) participates in ATP binding.

Belongs to the ABC transporter superfamily.

It localises to the cell inner membrane. In terms of biological role, part of the binding-protein-dependent transport system CbrABCD for uptake of the siderophore achromobactin. Probably responsible for energy coupling to the transport system. The sequence is that of Achromobactin transport ATP-binding protein CbrD (cbrD) from Dickeya dadantii (strain 3937) (Erwinia chrysanthemi (strain 3937)).